The chain runs to 132 residues: MSKKTDEILDSLKSLSLLEASELVKQIEEAFGVSAAASAGVVMAAPGAGGGASAAGEAAEEKTEFDVILESFDAAAKIKVLKEVRNATGLGLGEAKAMVEAAPKTIKEGASKEDAEALKKAIEAVGGKVTLK.

Belongs to the bacterial ribosomal protein bL12 family. In terms of assembly, homodimer. Part of the ribosomal stalk of the 50S ribosomal subunit. Forms a multimeric L10(L12)X complex, where L10 forms an elongated spine to which 2 to 4 L12 dimers bind in a sequential fashion. Binds GTP-bound translation factors.

Functionally, forms part of the ribosomal stalk which helps the ribosome interact with GTP-bound translation factors. Is thus essential for accurate translation. The polypeptide is Large ribosomal subunit protein bL12 (Prochlorococcus marinus (strain MIT 9211)).